The sequence spans 177 residues: Large ribosomal subunit protein uL10 (177 aa).

It belongs to the universal ribosomal protein uL10 family. As to quaternary structure, part of the ribosomal stalk of the 50S ribosomal subunit. The N-terminus interacts with L11 and the large rRNA to form the base of the stalk. The C-terminus forms an elongated spine to which L12 dimers bind in a sequential fashion forming a multimeric L10(L12)X complex.

Its function is as follows. Forms part of the ribosomal stalk, playing a central role in the interaction of the ribosome with GTP-bound translation factors. The protein is Large ribosomal subunit protein uL10 of Caldanaerobacter subterraneus subsp. tengcongensis (strain DSM 15242 / JCM 11007 / NBRC 100824 / MB4) (Thermoanaerobacter tengcongensis).